The following is a 172-amino-acid chain: Large ribosomal subunit protein bL17 (172 aa).

Residues 127 to 172 are disordered; sequence KAAKQDRAKRVKGSKKVTGDVAPAVAPVPSAPAETQEEAKAPESAE. Residues 147–159 show a composition bias toward low complexity; it reads VAPAVAPVPSAPA. Residues 163–172 show a composition bias toward basic and acidic residues; the sequence is EEAKAPESAE.

This sequence belongs to the bacterial ribosomal protein bL17 family. As to quaternary structure, part of the 50S ribosomal subunit. Contacts protein L32.

In Chlorobium luteolum (strain DSM 273 / BCRC 81028 / 2530) (Pelodictyon luteolum), this protein is Large ribosomal subunit protein bL17.